A 125-amino-acid polypeptide reads, in one-letter code: L-fucose mutarotase (125 aa).

Residue His-13 is the Proton donor of the active site.

The protein belongs to the RbsD / FucU family. FucU mutarotase subfamily.

The enzyme catalyses alpha-L-fucose = beta-L-fucose. With respect to regulation, active toward L-galactopyranoside and D-arabinopyranoside but no D-fucopyranoside activity detected. Plays a role in the catabolism of L-fucose. Involved in the anomeric conversion of L-fucose. This chain is L-fucose mutarotase, found in Xanthomonas campestris pv. campestris (strain ATCC 33913 / DSM 3586 / NCPPB 528 / LMG 568 / P 25).